A 30-amino-acid chain; its full sequence is Photosystem I reaction center subunit XII (30 aa).

Residues 7–26 form a helical membrane-spanning segment; that stretch reads IFVALLFALVSAVLAIRLGT.

This sequence belongs to the PsaM family.

It is found in the plastid. The protein resides in the chloroplast thylakoid membrane. This Gracilaria tenuistipitata var. liui (Red alga) protein is Photosystem I reaction center subunit XII.